The following is a 93-amino-acid chain: Small ribosomal subunit protein uS19 (93 aa).

Belongs to the universal ribosomal protein uS19 family.

Functionally, protein S19 forms a complex with S13 that binds strongly to the 16S ribosomal RNA. This chain is Small ribosomal subunit protein uS19, found in Ehrlichia canis (strain Jake).